We begin with the raw amino-acid sequence, 379 residues long: Succinyl-diaminopimelate desuccinylase (379 aa).

H70 lines the Zn(2+) pocket. The active site involves D72. D103 provides a ligand contact to Zn(2+). E137 acts as the Proton acceptor in catalysis. Zn(2+)-binding residues include E138, E166, and H352.

The protein belongs to the peptidase M20A family. DapE subfamily. In terms of assembly, homodimer. It depends on Zn(2+) as a cofactor. The cofactor is Co(2+).

It catalyses the reaction N-succinyl-(2S,6S)-2,6-diaminopimelate + H2O = (2S,6S)-2,6-diaminopimelate + succinate. The protein operates within amino-acid biosynthesis; L-lysine biosynthesis via DAP pathway; LL-2,6-diaminopimelate from (S)-tetrahydrodipicolinate (succinylase route): step 3/3. In terms of biological role, catalyzes the hydrolysis of N-succinyl-L,L-diaminopimelic acid (SDAP), forming succinate and LL-2,6-diaminopimelate (DAP), an intermediate involved in the bacterial biosynthesis of lysine and meso-diaminopimelic acid, an essential component of bacterial cell walls. The chain is Succinyl-diaminopimelate desuccinylase from Burkholderia multivorans (strain ATCC 17616 / 249).